We begin with the raw amino-acid sequence, 65 residues long: Large ribosomal subunit protein bL35 (65 aa).

Basic residues-rich tracts occupy residues Met-1–Lys-16 and His-31–Arg-45. The interval Met-1–Thr-47 is disordered.

This sequence belongs to the bacterial ribosomal protein bL35 family.

In Leuconostoc citreum (strain KM20), this protein is Large ribosomal subunit protein bL35.